Consider the following 345-residue polypeptide: Annexin A9 (345 aa).

4 Annexin repeats span residues 41–112 (FSVD…ALLQ), 113–184 (PAAQ…ALSK), 197–266 (NLEE…SLAS), and 270–341 (NTAL…ALCR).

This sequence belongs to the annexin family. Homodimer.

Functionally, may act as a low affinity receptor for acetylcholine. The chain is Annexin A9 (Anxa9) from Mus musculus (Mouse).